Reading from the N-terminus, the 764-residue chain is Putative alpha-1,3-mannosyltransferase MNN13 (764 aa).

Over 1–13 (MIKPILGTKKIRR) the chain is Cytoplasmic. The helical transmembrane segment at 14 to 34 (VICIIIGLFCILLLIGIFKHN) threads the bilayer. Residues 35–764 (STNSVNNEAS…YLGDVWVGKY (730 aa)) lie on the Lumenal side of the membrane. Residues asparagine 45 and asparagine 204 are each glycosylated (N-linked (GlcNAc...) asparagine).

Belongs to the MNN1/MNT family.

Its subcellular location is the golgi apparatus membrane. Its pathway is protein modification; protein glycosylation. Responsible for addition of the terminal mannose residues to the outer chain of core N-linked polysaccharides and to O-linked mannotriose. Implicated in late Golgi modifications. The polypeptide is Putative alpha-1,3-mannosyltransferase MNN13 (MNN13) (Candida albicans (strain SC5314 / ATCC MYA-2876) (Yeast)).